A 303-amino-acid chain; its full sequence is Y-box-binding protein 1 (303 aa).

Positions 1-12 (MSSEVETQQQQP) are enriched in polar residues. Residues 1–28 (MSSEVETQQQQPDALEGKAGQEPAATVG) form a disordered region. The region spanning 39–103 (GTVKWFNVRN…GEKGAEAANV (65 aa)) is the CSD domain. Positions 43-48 (WFNVRN) are C5-methylcytosine binding. A disordered region spans residues 98–303 (AEAANVTGPE…TPEAEQGGAE (206 aa)). Residues 122–132 (HYRRYPRRRGP) show a composition bias toward basic residues. Low complexity-rich tracts occupy residues 133–143 (PRNYQQNYQNN) and 173–187 (PPYY…RPQY). Composition is skewed to basic residues over residues 220 to 229 (FRPRFRRGPP) and 258 to 270 (RRYR…RRRR). Positions 271 to 284 (PENPKSQDGKETKA) are enriched in basic and acidic residues.

It belongs to the YBX1 family.

Its subcellular location is the cytoplasm. The protein localises to the nucleus. It localises to the cytoplasmic granule. It is found in the secreted. The protein resides in the extracellular exosome. Its subcellular location is the P-body. Functionally, DNA- and RNA-binding protein involved in various processes, such as translational repression, RNA stabilization, mRNA splicing and transcription regulation. Binds preferentially to the 5'-[CU]CUGCG-3' RNA motif and specifically recognizes mRNA transcripts modified by C5-methylcytosine (m5C). Promotes mRNA stabilization: acts by binding to m5C-containing mRNAs and preventing mRNA decay. Plays a role in the maternal-to-zygotic transition in early embryo by binding to m5C-containing maternal mRNAs and preventing their degradation. Also promotes maternal-to-zygotic transition in oocytes and embryos by promoting translation repression; molecular mechanisms governing translation repression are unknown. Plays a key role in RNA composition of extracellular exosomes by defining the sorting of small non-coding RNAs, such as tRNAs, Y RNAs, Vault RNAs and miRNAs. Probably sorts RNAs in exosomes by recognizing and binding C5-methylcytosine (m5C)-containing RNAs. Acts as a key effector of epidermal progenitors by preventing epidermal progenitor senescence: acts by regulating the translation of a senescence-associated subset of cytokine mRNAs, possibly by binding to m5C-containing mRNAs. Also involved in pre-mRNA alternative splicing regulation: binds to splice sites in pre-mRNA and regulates splice site selection. Also able to bind DNA and regulate transcription. Binds to promoters that contain a Y-box (5'-CTGATTGGCCAA-3'). Promotes separation of DNA strands that contain mismatches or are modified by cisplatin. Has endonucleolytic activity and can introduce nicks or breaks into double-stranded DNA, suggesting a role in DNA repair. The secreted form acts as an extracellular mitogen and stimulates cell migration and proliferation. This chain is Y-box-binding protein 1, found in Xenopus laevis (African clawed frog).